Here is a 280-residue protein sequence, read N- to C-terminus: Phosphate import ATP-binding protein PstB (280 aa).

In terms of domain architecture, ABC transporter spans isoleucine 34 to isoleucine 275. Residue glycine 66 to serine 73 participates in ATP binding.

This sequence belongs to the ABC transporter superfamily. Phosphate importer (TC 3.A.1.7) family. The complex is composed of two ATP-binding proteins (PstB), two transmembrane proteins (PstC and PstA) and a solute-binding protein (PstS).

It is found in the cell inner membrane. It catalyses the reaction phosphate(out) + ATP + H2O = ADP + 2 phosphate(in) + H(+). In terms of biological role, part of the ABC transporter complex PstSACB involved in phosphate import. Responsible for energy coupling to the transport system. In Burkholderia mallei (strain ATCC 23344), this protein is Phosphate import ATP-binding protein PstB.